Consider the following 750-residue polypeptide: Iron-sulfur clusters transporter ATM1, mitochondrial (750 aa).

The transit peptide at 1-16 (MFIRNVKLIKPSPVRF) directs the protein to the mitochondrion. Residues 17–124 (ISPIPFSFPI…PKNNLNFKIR (108 aa)) are Mitochondrial matrix-facing. Composition is skewed to low complexity over residues 43–75 (TSNF…KTLS) and 87–100 (DNDT…SSEN). The interval 43 to 100 (TSNFKSTSSSSSLKSTSTSTSTSTSKTTPKTLSKPPPKVKPPIQDNDTTSSGSSSSEN) is disordered. Residues 125–146 (VIIALSLLVGAKILNVQVPFYF) form a helical membrane-spanning segment. Positions 125–415 (VIIALSLLVG…LGSVYRELKQ (291 aa)) constitute an ABC transmembrane type-1 domain. Over 147-169 (KQIIDTMNIDWTNEVGVFSTVIG) the chain is Mitochondrial intermembrane. The chain crosses the membrane as a helical span at residues 170-193 (SLILAYGGARFGAVLFGELRNAIF). Over 194-242 (ASVAQSAIRRVAYNTFVKLLNMDLQFHLSRQTGGLTRAIDRGTKGISYV) the chain is Mitochondrial matrix. A helical membrane pass occupies residues 243-266 (LSAMVFHIIPITLEISIVCGILTY). A topological domain (mitochondrial intermembrane) is located at residue N267. Residues 268–288 (YGASFAAMTFVTMLAYSIFTI) traverse the membrane as a helical segment. Residues 289–354 (QTTAWRTKFR…SSVKIATSLA (66 aa)) are Mitochondrial matrix-facing. Residues 294-298 (RTKFR) and 357-360 (NSGQ) each bind glutathione. A helical transmembrane segment spans residues 355–373 (FLNSGQNFIFTSALTAMMY). The Mitochondrial intermembrane segment spans residues 374-388 (MGCQGVYTGELTVGD). A helical transmembrane segment spans residues 389 to 410 (LVLINQLVFQLSVPLNFLGSVY). Residue G407 coordinates glutathione. Over 411-750 (RELKQSLLDM…LFNSQTFEKK (340 aa)) the chain is Mitochondrial matrix. A disordered region spans residues 437–462 (PNAPPLKLNNNNNNNNNNNNNNNNSL). Positions 445 to 460 (NNNNNNNNNNNNNNNN) are enriched in low complexity. Residues 466-702 (IRFENVSFGY…QPNSLYAQLW (237 aa)) form the ABC transporter domain. ATP contacts are provided by residues Y475 and 499-510 (GPSGSGKSTILR).

Belongs to the ABC transporter superfamily. ABCB family. Heavy Metal importer (TC 3.A.1.210) subfamily. As to quaternary structure, homodimer.

It is found in the mitochondrion inner membrane. In terms of biological role, performs an essential function in the generation of cytoplasmic iron-sulfur proteins by mediating the ATP-dependent export of Fe/S cluster precursors synthesized by NFS1 and other mitochondrial proteins. Hydrolyzes ATP. Binds glutathione and may function by transporting a glutathione-conjugated iron-sulfur compound. The polypeptide is Iron-sulfur clusters transporter ATM1, mitochondrial (Candida albicans (strain SC5314 / ATCC MYA-2876) (Yeast)).